Here is a 598-residue protein sequence, read N- to C-terminus: Aspartate--tRNA(Asp/Asn) ligase (598 aa).

Glu182 provides a ligand contact to L-aspartate. The aspartate stretch occupies residues 206-209 (QIFK). Position 228 (Arg228) interacts with L-aspartate. ATP contacts are provided by residues 228 to 230 (RDE) and Gln237. Position 456 (His456) interacts with L-aspartate. Residue Glu490 participates in ATP binding. Arg497 lines the L-aspartate pocket. 542–545 (GLDR) contacts ATP.

Belongs to the class-II aminoacyl-tRNA synthetase family. Type 1 subfamily. Homodimer.

The protein localises to the cytoplasm. The catalysed reaction is tRNA(Asx) + L-aspartate + ATP = L-aspartyl-tRNA(Asx) + AMP + diphosphate. Functionally, aspartyl-tRNA synthetase with relaxed tRNA specificity since it is able to aspartylate not only its cognate tRNA(Asp) but also tRNA(Asn). Reaction proceeds in two steps: L-aspartate is first activated by ATP to form Asp-AMP and then transferred to the acceptor end of tRNA(Asp/Asn). The chain is Aspartate--tRNA(Asp/Asn) ligase from Lachnoclostridium phytofermentans (strain ATCC 700394 / DSM 18823 / ISDg) (Clostridium phytofermentans).